The sequence spans 582 residues: Threonine--tRNA ligase (582 aa).

A catalytic region spans residues 185 to 478; that stretch reads DHRKLGKELD…LVEHYGGAFP (294 aa). Residues C278, H329, and H455 each coordinate Zn(2+).

This sequence belongs to the class-II aminoacyl-tRNA synthetase family. In terms of assembly, homodimer. Requires Zn(2+) as cofactor.

It localises to the cytoplasm. The catalysed reaction is tRNA(Thr) + L-threonine + ATP = L-threonyl-tRNA(Thr) + AMP + diphosphate + H(+). Catalyzes the attachment of threonine to tRNA(Thr) in a two-step reaction: L-threonine is first activated by ATP to form Thr-AMP and then transferred to the acceptor end of tRNA(Thr). Also edits incorrectly charged L-seryl-tRNA(Thr). This is Threonine--tRNA ligase from Borrelia garinii subsp. bavariensis (strain ATCC BAA-2496 / DSM 23469 / PBi) (Borreliella bavariensis).